Reading from the N-terminus, the 860-residue chain is Leucine-rich repeat and death domain-containing protein 1 (860 aa).

A disordered region spans residues 1–103; the sequence is MSEKEGMSEV…TGTSQSLSSL (103 aa). A compositionally biased stretch (polar residues) spans 50–72; that stretch reads KSSNQIYETHPRQNTLESTSSSG. The span at 90 to 103 shows a compositional bias: low complexity; sequence TSTRTGTSQSLSSL. LRR repeat units follow at residues 139-163, 164-186, 187-210, 211-233, 235-256, 257-279, 281-302, 303-325, 326-348, 350-371, 372-394, 396-417, 419-440, 441-463, 465-486, 487-510, 512-532, 533-555, 557-578, 579-601, 603-624, 627-650, 651-673, 675-696, 697-719, and 721-742; these read LGAD…ILKI, KYVK…DSGD, LLGL…IQLL, HNLR…ISQL, NIRQ…LECL, GNLE…LPSL, TLRV…LCFL, PKLI…IREL, KNLE…IFQL, KIKE…IENF, RELR…ISCC, MLEC…IHKL, NLRK…ISHL, NNIC…IKNC, KIIK…LCAL, DSLY…SFSK, LLHL…FCSL, INLK…ISNM, SLHV…LCTL, ENLQ…ICNL, GIQK…LCQL, LEQL…LSNM, TQLK…IGEL, NLVS…LLSL, NDLQ…IYNI, and SLKE…ICKG. A Death domain is found at 764-852; sequence EKIFKIVANN…EIMDKITALN (89 aa). An LRR 27 repeat occupies 856 to 860; it reads RAIKF.

The chain is Leucine-rich repeat and death domain-containing protein 1 (LRRD1) from Homo sapiens (Human).